A 252-amino-acid chain; its full sequence is Triosephosphate isomerase (252 aa).

A substrate-binding site is contributed by 9–11 (NWK). The Electrophile role is filled by histidine 95. Glutamate 167 serves as the catalytic Proton acceptor. Substrate is bound by residues glycine 173, serine 213, and 234-235 (GG).

It belongs to the triosephosphate isomerase family. As to quaternary structure, homodimer.

Its subcellular location is the cytoplasm. The enzyme catalyses D-glyceraldehyde 3-phosphate = dihydroxyacetone phosphate. It functions in the pathway carbohydrate biosynthesis; gluconeogenesis. Its pathway is carbohydrate degradation; glycolysis; D-glyceraldehyde 3-phosphate from glycerone phosphate: step 1/1. In terms of biological role, involved in the gluconeogenesis. Catalyzes stereospecifically the conversion of dihydroxyacetone phosphate (DHAP) to D-glyceraldehyde-3-phosphate (G3P). The polypeptide is Triosephosphate isomerase (Syntrophotalea carbinolica (strain DSM 2380 / NBRC 103641 / GraBd1) (Pelobacter carbinolicus)).